Here is a 112-residue protein sequence, read N- to C-terminus: Signal peptidase complex-like protein DTM1 (112 aa).

Residues 1–25 (MGRDEMLRRSLVALAAAVVVTGVVT) form the signal peptide. The next 2 membrane-spanning stretches (helical) occupy residues 33 to 53 (ATYG…WEFF) and 92 to 112 (MAML…YVSS).

This sequence belongs to the SPCS1 family.

Its subcellular location is the endoplasmic reticulum membrane. Its function is as follows. Functions in tapetum development during early meiosis. May play a role in the endoplasmic reticulum (ER) membrane in the early stages of tapetum development in anthers. Seems to function after MSP1 and before UDT1. This Oryza sativa subsp. japonica (Rice) protein is Signal peptidase complex-like protein DTM1.